Reading from the N-terminus, the 70-residue chain is Aurein-3.1 (70 aa).

The N-terminal stretch at 1 to 22 is a signal peptide; sequence MAFLKKSLFLVLFLGLVSLSIC. Residues 23 to 49 constitute a propeptide that is removed on maturation; that stretch reads EKEKRQNEEDEDENEAANHEEGSEEKR. The interval 27–48 is disordered; the sequence is RQNEEDEDENEAANHEEGSEEK. A compositionally biased stretch (basic and acidic residues) spans 38–48; that stretch reads AANHEEGSEEK. The residue at position 66 (Ile-66) is an Isoleucine amide.

Expressed by the skin dorsal glands.

The protein localises to the secreted. The protein resides in the target cell membrane. Its function is as follows. Amphipathic alpha-helical antimicrobial peptide with weak to potent activity against Gram-positive bacteria, and no activity against Gram-negative bacteria. Probably acts by disturbing membrane functions with its amphipathic structure. Shows anticancer activity. The polypeptide is Aurein-3.1 (Ranoidea aurea (Green and golden bell frog)).